The chain runs to 1238 residues: Virulence sensor protein BvgS (1238 aa).

The first 32 residues, 1–32 (MPAPHRLYPRSLICLAQALLVWALLAWAPAQA), serve as a signal peptide directing secretion. Residues 33-307 (SQELTLVGKA…REQQWMANHP (275 aa)) are Cytoplasmic-facing. Residues 308-331 (VVKVAVLNLFAPFTLFRTDEQFGG) form a helical membrane-spanning segment. Residues 332 to 541 (ISAAVLQLLQ…PRTWYAYRNE (210 aa)) lie on the Periplasmic side of the membrane. The helical transmembrane segment at 542 to 563 (IYLLIGLGLLSALLFLSWIVYL) threads the bilayer. Over 564–1238 (RRQIRQRKRA…LEQRPHQGQP (675 aa)) the chain is Cytoplasmic. One can recognise a PAS domain in the interval 580–651 (QLEFMRVLID…MHEFLLTRMA (72 aa)). Positions 652 to 708 (AEREPRFEDRDVTLHGRTRHVYQWTVPYGDSLGELKGIIGGWIDITERAELLRELHD) constitute a PAC domain. Residues 726–948 (TMSHEIRTPM…TVSVDLRLTM (223 aa)) form the Histidine kinase domain. His729 bears the Phosphohistidine; by autocatalysis mark. A Response regulatory domain is found at 974-1095 (RVLVVDDHKP…ALRQRLNEAA (122 aa)). Asp1023 is subject to 4-aspartylphosphate. The HPt domain maps to 1133 to 1228 (DEALIRQLLE…AALETQLRAW (96 aa)). His1172 is modified (phosphohistidine).

Post-translationally, activation requires a sequential transfer of a phosphate group from a His in the primary transmitter domain, to an Asp in the receiver domain and to a His in the secondary transmitter domain.

The protein localises to the cell inner membrane. It carries out the reaction ATP + protein L-histidine = ADP + protein N-phospho-L-histidine.. Functionally, member of the two-component regulatory system BvgS/BvgA. Phosphorylates BvgA via a four-step phosphorelay in response to environmental signals. In Bordetella parapertussis (strain 12822 / ATCC BAA-587 / NCTC 13253), this protein is Virulence sensor protein BvgS (bvgS).